The sequence spans 272 residues: MPELPEVETTRRGIAPHILHHPITAVTLRHTQLRWPIDKALSRNLPGRTLVRADRRGKYLLLAVDDGRTLIWHLGMSGSLRIVEPTEPPGKHDHIDLRFAHGRVLRYHDPRRFGAFLATADDPAQHALICHLGPEPLTDDFNGEYLYERSRKRSTAVKSWIMDSRVVVGVGNIYANESLFLAKIHPLRAAGKLTRPACHRLADIIKAVLARSITQGGTTLRDFVGGDGKPGYFAQQLNVYGRGGEPCPVCAKPLTEKPLSQRTTVYCTHCQN.

Pro2 functions as the Schiff-base intermediate with DNA in the catalytic mechanism. Glu3 serves as the catalytic Proton donor. The Proton donor; for beta-elimination activity role is filled by Lys58. His92, Arg111, and Arg153 together coordinate DNA. An FPG-type zinc finger spans residues 238-272; it reads NVYGRGGEPCPVCAKPLTEKPLSQRTTVYCTHCQN. Catalysis depends on Arg262, which acts as the Proton donor; for delta-elimination activity.

The protein belongs to the FPG family. Monomer. Zn(2+) is required as a cofactor.

It catalyses the reaction Hydrolysis of DNA containing ring-opened 7-methylguanine residues, releasing 2,6-diamino-4-hydroxy-5-(N-methyl)formamidopyrimidine.. It carries out the reaction 2'-deoxyribonucleotide-(2'-deoxyribose 5'-phosphate)-2'-deoxyribonucleotide-DNA = a 3'-end 2'-deoxyribonucleotide-(2,3-dehydro-2,3-deoxyribose 5'-phosphate)-DNA + a 5'-end 5'-phospho-2'-deoxyribonucleoside-DNA + H(+). In terms of biological role, involved in base excision repair of DNA damaged by oxidation or by mutagenic agents. Acts as a DNA glycosylase that recognizes and removes damaged bases. Has a preference for oxidized purines, such as 7,8-dihydro-8-oxoguanine (8-oxoG). Has AP (apurinic/apyrimidinic) lyase activity and introduces nicks in the DNA strand. Cleaves the DNA backbone by beta-delta elimination to generate a single-strand break at the site of the removed base with both 3'- and 5'-phosphates. The sequence is that of Formamidopyrimidine-DNA glycosylase from Teredinibacter turnerae (strain ATCC 39867 / T7901).